A 408-amino-acid polypeptide reads, in one-letter code: Multidrug resistance protein MdtG (408 aa).

11 helical membrane-spanning segments follow: residues 16 to 36, 58 to 78, 92 to 112, 115 to 135, 146 to 166, 173 to 193, 224 to 244, 256 to 276, 290 to 310, 319 to 339, and 378 to 398; these read LIVAWLGCFLTGAAFSLVMPF, IVFSITFLFSAIASPFWGGLA, LGMGIVMVLMGLAQNIWQFLI, ALLGLLGGFVPNANALIATQV, TLSTGGVSGALLGPMAGGLLA, PVFFITASVLILCFFVTLFCI, LFVTTLIIQVATGSIAPILTL, VAFISGMIASVPGVAALLSAP, ILITALIFSVLLLIPMSYVQT, FLLGAADGALLPAVQTLLVYN, and AVFLVTAGVVLFNAVYSWNSL.

It belongs to the major facilitator superfamily. DHA1 family. MdtG (TC 2.A.1.2.20) subfamily.

The protein resides in the cell inner membrane. Its function is as follows. Confers resistance to fosfomycin and deoxycholate. The sequence is that of Multidrug resistance protein MdtG from Escherichia coli O81 (strain ED1a).